An 81-amino-acid polypeptide reads, in one-letter code: Omega-conotoxin-like 3 (81 aa).

The signal sequence occupies residues 1-22; sequence MKLTCMMIVAVLFLTASIFITA. Residues 23–51 constitute a propeptide that is removed on maturation; it reads DNSRNGIENLPRMRRHEMKKPKASKLNKR. Disulfide bonds link Cys-53-Cys-71, Cys-60-Cys-75, and Cys-70-Cys-79.

Belongs to the conotoxin O1 superfamily. In terms of tissue distribution, expressed by the venom duct.

Its subcellular location is the secreted. Omega-conotoxins act at presynaptic membranes, they bind and block voltage-gated calcium channels (Cav). In Conus imperialis (Imperial cone), this protein is Omega-conotoxin-like 3.